We begin with the raw amino-acid sequence, 317 residues long: mRNA 3'-end-processing protein yth-1 (317 aa).

Positions 1 to 20 (MATTTQTTTNSLPSGAGGPQ) are disordered. 5 C3H1-type zinc fingers span residues 51–78 (PADR…HVTA), 93–120 (GFGS…HEYN), 121–149 (LRKM…HIDP), 150–177 (LSRL…HFRR), and 179–202 (LCLY…HPRW). Residues 202 to 217 (WTADKDMEKPRAKGEG) are compositionally biased toward basic and acidic residues. The disordered stretch occupies residues 202–317 (WTADKDMEKP…GRGGFRGKGH (116 aa)). A compositionally biased stretch (low complexity) spans 223–237 (QQQQQQQQQQHMGDA). The span at 253–288 (YMDRERERDRDNREREMMMQGRDRDGGGHDRHKDRF) shows a compositional bias: basic and acidic residues. The segment covering 289–301 (GGGGGGGGGGRGR) has biased composition (gly residues). Residues 302 to 317 (GGWRGRGRGGFRGKGH) show a composition bias toward basic residues.

The protein belongs to the CPSF4/YTH1 family.

It is found in the nucleus. Component of the cleavage factor I (CF I) involved in pre-mRNA 3'-end processing. The chain is mRNA 3'-end-processing protein yth-1 (yth-1) from Neurospora crassa (strain ATCC 24698 / 74-OR23-1A / CBS 708.71 / DSM 1257 / FGSC 987).